The chain runs to 98 residues: NADH-ubiquinone oxidoreductase chain 4L (98 aa).

3 helical membrane passes run 1-21 (MPPIYINIILAYTASLVGLLM), 29-49 (SLLCLEGMMLSLFILATILSL), and 61-81 (IILLIFAGCETAVGLALLVMI).

It belongs to the complex I subunit 4L family. As to quaternary structure, core subunit of respiratory chain NADH dehydrogenase (Complex I) which is composed of 45 different subunits.

It localises to the mitochondrion inner membrane. The enzyme catalyses a ubiquinone + NADH + 5 H(+)(in) = a ubiquinol + NAD(+) + 4 H(+)(out). In terms of biological role, core subunit of the mitochondrial membrane respiratory chain NADH dehydrogenase (Complex I) which catalyzes electron transfer from NADH through the respiratory chain, using ubiquinone as an electron acceptor. Part of the enzyme membrane arm which is embedded in the lipid bilayer and involved in proton translocation. The sequence is that of NADH-ubiquinone oxidoreductase chain 4L (MT-ND4L) from Galeopterus variegatus (Malayan flying lemur).